The sequence spans 90 residues: Large ribosomal subunit protein uL23c (90 aa).

The protein belongs to the universal ribosomal protein uL23 family. In terms of assembly, part of the 50S ribosomal subunit.

Its subcellular location is the plastid. The protein resides in the chloroplast. Binds to 23S rRNA. In Psilotum nudum (Whisk fern), this protein is Large ribosomal subunit protein uL23c (rpl23).